The sequence spans 124 residues: Small ribosomal subunit protein eS6 (124 aa).

The protein belongs to the eukaryotic ribosomal protein eS6 family.

The polypeptide is Small ribosomal subunit protein eS6 (Methanococcus maripaludis (strain DSM 14266 / JCM 13030 / NBRC 101832 / S2 / LL)).